A 171-amino-acid chain; its full sequence is UPF0260 protein Nham_1404 (171 aa).

It belongs to the UPF0260 family.

This chain is UPF0260 protein Nham_1404, found in Nitrobacter hamburgensis (strain DSM 10229 / NCIMB 13809 / X14).